The chain runs to 444 residues: Probable glycine dehydrogenase (decarboxylating) subunit 1 (444 aa).

The protein belongs to the GcvP family. N-terminal subunit subfamily. As to quaternary structure, the glycine cleavage system is composed of four proteins: P, T, L and H. In this organism, the P 'protein' is a heterodimer of two subunits.

The enzyme catalyses N(6)-[(R)-lipoyl]-L-lysyl-[glycine-cleavage complex H protein] + glycine + H(+) = N(6)-[(R)-S(8)-aminomethyldihydrolipoyl]-L-lysyl-[glycine-cleavage complex H protein] + CO2. In terms of biological role, the glycine cleavage system catalyzes the degradation of glycine. The P protein binds the alpha-amino group of glycine through its pyridoxal phosphate cofactor; CO(2) is released and the remaining methylamine moiety is then transferred to the lipoamide cofactor of the H protein. The sequence is that of Probable glycine dehydrogenase (decarboxylating) subunit 1 from Prosthecochloris aestuarii (strain DSM 271 / SK 413).